The primary structure comprises 257 residues: Electron transfer flavoprotein subunit beta (257 aa).

This sequence belongs to the ETF beta-subunit/FixA family. Heterodimer of an alpha and a beta subunit. FAD serves as cofactor. AMP is required as a cofactor.

The electron transfer flavoprotein serves as a specific electron acceptor for other dehydrogenases. It transfers the electrons to the main respiratory chain via ETF-ubiquinone oxidoreductase (ETF dehydrogenase). This is Electron transfer flavoprotein subunit beta (etfB) from Bacillus subtilis (strain 168).